A 461-amino-acid chain; its full sequence is Argininosuccinate lyase (461 aa).

This sequence belongs to the lyase 1 family. Argininosuccinate lyase subfamily.

Its subcellular location is the cytoplasm. It carries out the reaction 2-(N(omega)-L-arginino)succinate = fumarate + L-arginine. It functions in the pathway amino-acid biosynthesis; L-arginine biosynthesis; L-arginine from L-ornithine and carbamoyl phosphate: step 3/3. In Streptococcus gordonii (strain Challis / ATCC 35105 / BCRC 15272 / CH1 / DL1 / V288), this protein is Argininosuccinate lyase.